Reading from the N-terminus, the 137-residue chain is Small ribosomal subunit protein uS11 (137 aa).

Disordered stretches follow at residues 1-32 (MPPK…AHIK) and 118-137 (ISDV…RRRV). Positions 12–21 (KTQKSRRRDK) are enriched in basic residues.

It belongs to the universal ribosomal protein uS11 family. In terms of assembly, part of the 30S ribosomal subunit. Interacts with proteins S7 and S18. Binds to IF-3.

Located on the platform of the 30S subunit, it bridges several disparate RNA helices of the 16S rRNA. Forms part of the Shine-Dalgarno cleft in the 70S ribosome. This is Small ribosomal subunit protein uS11 from Nocardia farcinica (strain IFM 10152).